The primary structure comprises 86 residues: UPF0213 protein OB0043 (86 aa).

One can recognise a GIY-YIG domain in the interval Glu3 to Ile80.

Belongs to the UPF0213 family.

This chain is UPF0213 protein OB0043, found in Oceanobacillus iheyensis (strain DSM 14371 / CIP 107618 / JCM 11309 / KCTC 3954 / HTE831).